A 167-amino-acid polypeptide reads, in one-letter code: Urease accessory protein UreE (167 aa).

Belongs to the UreE family.

The protein localises to the cytoplasm. Functionally, involved in urease metallocenter assembly. Binds nickel. Probably functions as a nickel donor during metallocenter assembly. The protein is Urease accessory protein UreE of Pseudomonas aeruginosa (strain LESB58).